Consider the following 410-residue polypeptide: Serine hydroxymethyltransferase (410 aa).

Residues Leu119 and 123 to 125 (GHL) each bind (6S)-5,6,7,8-tetrahydrofolate. Lys228 carries the post-translational modification N6-(pyridoxal phosphate)lysine. Residue 351-353 (SPF) participates in (6S)-5,6,7,8-tetrahydrofolate binding.

Belongs to the SHMT family. Homodimer. Pyridoxal 5'-phosphate serves as cofactor.

The protein localises to the cytoplasm. The enzyme catalyses (6R)-5,10-methylene-5,6,7,8-tetrahydrofolate + glycine + H2O = (6S)-5,6,7,8-tetrahydrofolate + L-serine. It participates in one-carbon metabolism; tetrahydrofolate interconversion. The protein operates within amino-acid biosynthesis; glycine biosynthesis; glycine from L-serine: step 1/1. Its function is as follows. Catalyzes the reversible interconversion of serine and glycine with tetrahydrofolate (THF) serving as the one-carbon carrier. This reaction serves as the major source of one-carbon groups required for the biosynthesis of purines, thymidylate, methionine, and other important biomolecules. Also exhibits THF-independent aldolase activity toward beta-hydroxyamino acids, producing glycine and aldehydes, via a retro-aldol mechanism. The chain is Serine hydroxymethyltransferase from Clostridium perfringens (strain ATCC 13124 / DSM 756 / JCM 1290 / NCIMB 6125 / NCTC 8237 / Type A).